The primary structure comprises 426 residues: MKHLTEMVRQHKAGKTNGIYAVCSAHPLVLEAAIRYASANQTPLLIEATSNQVDQFGGYTGMTPADFRGFVCQLAESLNFPQDALILGGDHLGPNRWQNLPAAQAMANADDLIKSYVAAGFKKIHLDCSMSCQDDPIPLTDDIVAERAARLAKVAEETCLEHFGEADLEYVIGTEVPVPGGAHETLSELAVTTPDAARATLEAHRHAFEKQGLNAIWPRIIALVVQPGVEFDHTNVIDYQPAKASALSQMVENYETLIFEAHSTDYQTPQSLRQLVIDHFAILKVGPALTFALREALFSLAAIEEELVPAKACSGLRQVLEDVMLDRPEYWQSHYHGDGNARRLARGYSYSDRVRYYWPDSQIDDAFAHLVRNLADSPIPLPLISQYLPLQYVKVRSGELQPTPRELIINHIQDILAQYHTACEGQ.

The protein belongs to the GatZ/KbaZ family. KbaZ subfamily. Forms a complex with KbaY.

It participates in carbohydrate metabolism; D-tagatose 6-phosphate degradation; D-glyceraldehyde 3-phosphate and glycerone phosphate from D-tagatose 6-phosphate: step 2/2. Component of the tagatose-1,6-bisphosphate aldolase KbaYZ that is required for full activity and stability of the Y subunit. Could have a chaperone-like function for the proper and stable folding of KbaY. When expressed alone, KbaZ does not show any aldolase activity. In Escherichia coli O139:H28 (strain E24377A / ETEC), this protein is D-tagatose-1,6-bisphosphate aldolase subunit KbaZ.